A 184-amino-acid polypeptide reads, in one-letter code: MDLSGSLLIAMPSMADPRFERSLVLICAHSPDGAMGLVINKPVEDLSFAGMLEQLNIPRAPNGRDIRVHLGGPMERGRGFVLHSPDYMSVGATMLVSGKFGMTATVDILEALARGQGPSSALMALGYSGWGPGQVEAEVQRNDWLTAEAPSELVFSDDDPGKWTGMLRHMGIDPLTLSSTAGHA.

This sequence belongs to the UPF0301 (AlgH) family.

The protein is UPF0301 protein RSKD131_2391 of Cereibacter sphaeroides (strain KD131 / KCTC 12085) (Rhodobacter sphaeroides).